A 289-amino-acid polypeptide reads, in one-letter code: ATP synthase gamma chain (289 aa).

Belongs to the ATPase gamma chain family. In terms of assembly, F-type ATPases have 2 components, CF(1) - the catalytic core - and CF(0) - the membrane proton channel. CF(1) has five subunits: alpha(3), beta(3), gamma(1), delta(1), epsilon(1). CF(0) has three main subunits: a, b and c.

Its subcellular location is the cell inner membrane. Functionally, produces ATP from ADP in the presence of a proton gradient across the membrane. The gamma chain is believed to be important in regulating ATPase activity and the flow of protons through the CF(0) complex. The protein is ATP synthase gamma chain of Azoarcus sp. (strain BH72).